Here is a 245-residue protein sequence, read N- to C-terminus: MYPVDLHMHTVASTHAYSTLSDYIAQAKQKGIKLFAITDHGPDMEDAPHHWHFINMRIWPRVVDGVGILRGIEANIKNVDGEIDCSGKMFDSLDLIIAGFHEPVFAPHDKATNTQAMIATIASGNVHIISHPGNPKYEIDVKAVAEAAAKHQVALEINNSSFLHSRKGSEDNCRAVAAAVRDAGGWVALGSDSHTAFSMGEFEECLKILDAVDFPPERILNVSPRRLLNFLESRGMAPIAEFADL.

The Zn(2+) site is built by H7, H9, H15, H40, E73, H101, H131, D192, and H194.

It belongs to the PHP family. Homotrimer. Requires Zn(2+) as cofactor.

This chain is Probable phosphatase YcdX, found in Shigella dysenteriae serotype 1 (strain Sd197).